The chain runs to 248 residues: 2,3-bisphosphoglycerate-dependent phosphoglycerate mutase (248 aa).

Residues 8–15 (RHGESTWN), 21–22 (TG), Arg-60, 87–90 (ERHY), Lys-98, 114–115 (RR), and 183–184 (GN) each bind substrate. Residue His-9 is the Tele-phosphohistidine intermediate of the active site. Residue Glu-87 is the Proton donor/acceptor of the active site.

This sequence belongs to the phosphoglycerate mutase family. BPG-dependent PGAM subfamily. In terms of assembly, homodimer.

The catalysed reaction is (2R)-2-phosphoglycerate = (2R)-3-phosphoglycerate. It functions in the pathway carbohydrate degradation; glycolysis; pyruvate from D-glyceraldehyde 3-phosphate: step 3/5. Catalyzes the interconversion of 2-phosphoglycerate and 3-phosphoglycerate. The chain is 2,3-bisphosphoglycerate-dependent phosphoglycerate mutase from Paraburkholderia phytofirmans (strain DSM 17436 / LMG 22146 / PsJN) (Burkholderia phytofirmans).